A 297-amino-acid chain; its full sequence is HTH-type transcriptional regulator ArgP (297 aa).

Positions 4 to 60 (PDYRTLQALDAVIRERGFERAAQKLCITQSAVSQRIKQLENMFGQPLLVRTVPPRPT) constitute an HTH lysR-type domain. Positions 21–40 (FERAAQKLCITQSAVSQRIK) form a DNA-binding region, H-T-H motif.

It belongs to the LysR transcriptional regulatory family. Homodimer.

Controls the transcription of genes involved in arginine and lysine metabolism. The chain is HTH-type transcriptional regulator ArgP from Escherichia fergusonii (strain ATCC 35469 / DSM 13698 / CCUG 18766 / IAM 14443 / JCM 21226 / LMG 7866 / NBRC 102419 / NCTC 12128 / CDC 0568-73).